The chain runs to 329 residues: NADH-quinone oxidoreductase subunit H 2 (329 aa).

A run of 8 helical transmembrane segments spans residues 12 to 32 (GAKI…LVFA), 78 to 98 (WLFY…FAVI), 120 to 140 (VGLL…ALGG), 159 to 179 (LISY…LAGS), 191 to 211 (GVWF…SIAA), 242 to 262 (LFFV…TTFF), 270 to 290 (LLPP…FFIW), and 309 to 329 (KVLT…LMFV).

The protein belongs to the complex I subunit 1 family. In terms of assembly, NDH-1 is composed of 14 different subunits. Subunits NuoA, H, J, K, L, M, N constitute the membrane sector of the complex.

The protein localises to the cell inner membrane. It catalyses the reaction a quinone + NADH + 5 H(+)(in) = a quinol + NAD(+) + 4 H(+)(out). NDH-1 shuttles electrons from NADH, via FMN and iron-sulfur (Fe-S) centers, to quinones in the respiratory chain. The immediate electron acceptor for the enzyme in this species is believed to be ubiquinone. Couples the redox reaction to proton translocation (for every two electrons transferred, four hydrogen ions are translocated across the cytoplasmic membrane), and thus conserves the redox energy in a proton gradient. This subunit may bind ubiquinone. The chain is NADH-quinone oxidoreductase subunit H 2 from Geobacter sulfurreducens (strain ATCC 51573 / DSM 12127 / PCA).